A 329-amino-acid polypeptide reads, in one-letter code: R-linalool synthase (329 aa).

Mg(2+) is bound at residue aspartate 79. Positions 79–83 (DDQFD) match the DDXXD motif motif. Position 172 (arginine 172) interacts with substrate. Positions 218 and 222 each coordinate Mg(2+). Residues 218–226 (NELHSFEKD) carry the NXXXSXXXD motif motif. Lysine 225 contacts substrate. Aspartate 226 is a binding site for Mg(2+). 308–309 (RY) provides a ligand contact to substrate.

Belongs to the terpene synthase family. In terms of assembly, homodimer. Requires Mg(2+) as cofactor.

The catalysed reaction is (2E)-geranyl diphosphate + H2O = (R)-linalool + diphosphate. It carries out the reaction (2E,6E)-farnesyl diphosphate + H2O = (6E)-nerolidol + diphosphate. In terms of biological role, in vitro, catalyzes the formation of R-linalool from geranyl diphosphate (GPP). Can also accept farnesyl diphosphate (FPP) as substrate to produce trans-nerolidol. This is R-linalool synthase from Streptomyces clavuligerus.